Consider the following 87-residue polypeptide: Kawaguchipeptin peptide (87 aa).

A propeptide spanning residues 1-33 is cleaved from the precursor; it reads MKNPTLLPKLTAPVERPAVTSSDLKQASSVDAA. W34 carries 3'-prenyl-2',N2-cyclotryptophan; partial lipidation. The cyclopeptide (Trp-Pro) cross-link spans 34-44; that stretch reads WLNGDNNWSTP. L35 is subject to D-leucine; partial. W41 carries 3'-prenyl-2',N2-cyclotryptophan; partial lipidation. Residues 45-51 constitute a propeptide that is removed on maturation; sequence FAGVNAA. W52 is lipidated: 3'-prenyl-2',N2-cyclotryptophan; partial. The segment at residues 52 to 62 is a cross-link (cyclopeptide (Trp-Pro)); it reads WLNGDNNWSTP. A D-leucine; partial modification is found at L53. The 3'-prenyl-2',N2-cyclotryptophan; partial moiety is linked to residue W59. Positions 63–69 are excised as a propeptide; that stretch reads FAGVNAA. W70 is lipidated: 3'-prenyl-2',N2-cyclotryptophan; partial. A cross-link (cyclopeptide (Trp-Pro)) is located at residues 70–80; it reads WLNGDNNWSTP. Residue L71 is modified to D-leucine; partial. A lipid anchor (3'-prenyl-2',N2-cyclotryptophan; partial) is attached at W77. A propeptide spanning residues 81-87 is cleaved from the precursor; sequence FAADGAE.

Post-translationally, kawaguchipeptin A contains a D-Leu and 2 prenylated Trp, whereas kawaguchipeptin B only contains unmodified amino acids. In terms of processing, kawaguchipeptin A is prenylated in vivo. Upon expression in E.coli of the whole operon, Trp residues are prenylated by C-prenyltransferase KgpF. Prenylation by KgpF is likely the last enzymatic step in the biosynthetic maturation of kawaguchipeptin A.

Functionally, both kawaguchipeptin A and B, which only differ by post-translational modifications, have antibacterial activities, since they inhibit the growth of the Gram-positive bacterium S.aureus at a concentration of 1 ug/mL. The chain is Kawaguchipeptin peptide from Microcystis aeruginosa (strain NIES-88 / KW-MA1-3).